Consider the following 175-residue polypeptide: uncharacterized protein (175 aa).

Transmembrane regions (helical) follow at residues 21–41 (IVLD…MGPI) and 50–70 (LVGL…VFVI).

It is found in the membrane. This is an uncharacterized protein from Saccharomyces cerevisiae (strain ATCC 204508 / S288c) (Baker's yeast).